Consider the following 332-residue polypeptide: Cell growth regulator with RING finger domain protein 1 (332 aa).

The RING-type zinc finger occupies 274 to 309 (CVVCQNGGVNWVLLPCRHACLCDSCVRYFKQCPMCR).

The protein resides in the nucleus. It is found in the endoplasmic reticulum. Able to inhibit growth in several cell lines. The sequence is that of Cell growth regulator with RING finger domain protein 1 (Cgrrf1) from Mus musculus (Mouse).